Consider the following 577-residue polypeptide: MGKLIKLITTLTVLVSLLQYCCEFNSGSISCERTQTLCHYTNPRVWNTYFSRNCELYKNKVSPGFDIVARKYDTAVKPVIDDATVKVNKVAIQPAFKVIHSQCKKWNCGKYYQLVRSPMVKTRRFFFAKYNAFVKPNLDKFFTAEFRSHLKERILKYKNIGHYYFTITSRCIKSKYDFIVGNTEEKLMGKFKNKDTHGIHGSVTREPSSEDMVLTVSTMESDEEELTTTSTQTVVETITLDQEEASAVANHAHDDEASTDVEGSTDVNVNEQALLQEDFDMWSETILQKTQDVIQLFEKDVSKYINGKLVEEANHFKAKFQSLDDKSKKFFSKISLAINDIECVEGIDSETGKKIFFDKSGSTEISQYITRELVREYFNETRSTLDELTNAMEKDLSEITDEIEKKVNAIREENVEVFEEWGDIIVNEWSKRMAYVDVINAHMGADDDTTLDEEKAKSSVNWKKFLKGKKQIIESRDKLAHHSADLSRVNAFRQKVQKKILSFTQESGEFLYILRSKANLQFQERERKERERKEREKAAAEEFQRQQELLRQQEEEDEEDVSYTSTSTITTTTTMTL.

A signal peptide spans Met-1–Glu-23. 2 coiled-coil regions span residues Asn-379–Glu-416 and Ile-513–Val-561. Residues Arg-525–Arg-545 are compositionally biased toward basic and acidic residues. Residues Arg-525–Leu-577 form a disordered region. The segment covering Ser-562–Leu-577 has biased composition (low complexity).

Belongs to the SHE10 family. In terms of assembly, component of the mitochondria-localized RNase mitochondrial RNA-processing (RNase MRP) composed of one single RNA encoded by the NME1 gene and at least 31 proteins. Absent in the nucleus-localized RNase MRP (NuMRP).

Its subcellular location is the mitochondrion. Involved in spore wall assembly. May be a component of the mitochondrial RNase MRP (MtMRP), a ribonucleoprotein endoribonuclease involved in the cleaving RNA transcripts to generate primers for DNA replication in mitochondria. In Saccharomyces cerevisiae (strain YJM789) (Baker's yeast), this protein is Outer spore wall assembly protein SHE10.